The primary structure comprises 293 residues: ELMO domain-containing protein 2 (293 aa).

The ELMO domain occupies 126-282; sequence QHEELLMKLW…KFHEKIKGLL (157 aa).

Alveolar cells (morphologically type II cells) and alveolar macrophages (at protein level). Expressed in brain, colon, heart, kidney, liver, lung, muscle, placenta, small intestine, spleen, stomach and testis. In lung it is expressed in alveolar macrophages and alveolar walls.

Acts as a GTPase-activating protein (GAP) toward guanine nucleotide exchange factors like ARL2, ARL3, ARF1 and ARF6, but not for GTPases outside the Arf family. Regulates IFN-related antiviral responses. The protein is ELMO domain-containing protein 2 (ELMOD2) of Homo sapiens (Human).